The chain runs to 396 residues: MYIDTSASSRMTDNKGSVITINGGESAGNSPPSQRKSSTSESPPELRILCFDLTYYNRTTQFLLSCAGVFFLYILYGYLQELIFTVEGFKPYGWFLTLVQFGYYIGFGLVERRLEGYRISGGSFWNIEPEPRCIPMRTYLILAALTLGTMGLSNSSLGYLNYPTQVIFKCCKLIPVLVGSILIQGKRYGLLDFAAATCMCIGLAWFTLADSQMTPNFNLLGVAMISGALLCDAAIGNVQEKAMREFKAPSSEVVFYSYGLGFVYLFVIMLVTGNFFSGFAFCLEHPVETFGYGFLFSLSGYLGIQFVLALVRSSGAPIAATVTTARKAVTIAFSFVLFSKPFTLQYLWSGLIVVLGIYLNVYSKRNKLTLADVRQRIKQFGAKVARSPSRKFLIEV.

The segment at 22–42 is disordered; sequence NGGESAGNSPPSQRKSSTSES. Polar residues predominate over residues 27–42; that stretch reads AGNSPPSQRKSSTSES. A phosphoserine mark is found at S37 and S40. N57 is a glycosylation site (N-linked (GlcNAc...) asparagine). The next 10 membrane-spanning stretches (helical) occupy residues 66-86, 91-111, 140-160, 163-183, 189-209, 216-236, 253-273, 290-310, 318-338, and 342-362; these read CAGVFFLYILYGYLQELIFTV, PYGWFLTLVQFGYYIGFGLVE, LILAALTLGTMGLSNSSLGYL, PTQVIFKCCKLIPVLVGSILI, GLLDFAAATCMCIGLAWFTLA, NFNLLGVAMISGALLCDAAIG, VVFYSYGLGFVYLFVIMLVTG, FGYGFLFSLSGYLGIQFVLAL, IAATVTTARKAVTIAFSFVLF, and FTLQYLWSGLIVVLGIYLNVY.

This sequence belongs to the nucleotide-sugar transporter family. SLC35B subfamily.

The protein localises to the golgi apparatus membrane. Mediates the transport of adenosine 3'-phospho 5'-phosphosulfate (PAPS), from cytosol into Golgi. PAPS is a universal sulfuryl donor for sulfation events that take place in the Golgi. Essential for viability. Involved in glycosaminoglycan synthesis and the subsequent signaling. May be involved in hh and dpp signaling by controlling the sulfation of heparan sulfate (HS). The sequence is that of Adenosine 3'-phospho 5'-phosphosulfate transporter 2 (Papst2) from Drosophila melanogaster (Fruit fly).